The primary structure comprises 353 residues: Phosphate acyltransferase (353 aa).

Belongs to the PlsX family. Homodimer. Probably interacts with PlsY.

It localises to the cytoplasm. The enzyme catalyses a fatty acyl-[ACP] + phosphate = an acyl phosphate + holo-[ACP]. It functions in the pathway lipid metabolism; phospholipid metabolism. Its function is as follows. Catalyzes the reversible formation of acyl-phosphate (acyl-PO(4)) from acyl-[acyl-carrier-protein] (acyl-ACP). This enzyme utilizes acyl-ACP as fatty acyl donor, but not acyl-CoA. This is Phosphate acyltransferase from Syntrophobacter fumaroxidans (strain DSM 10017 / MPOB).